The sequence spans 122 residues: Large ribosomal subunit protein uL14c (122 aa).

It belongs to the universal ribosomal protein uL14 family. In terms of assembly, part of the 50S ribosomal subunit.

Its subcellular location is the plastid. The protein resides in the chloroplast. Binds to 23S rRNA. This is Large ribosomal subunit protein uL14c from Marchantia polymorpha (Common liverwort).